The following is a 500-amino-acid chain: Dipeptide and tripeptide permease A (500 aa).

Residues 1–21 are Cytoplasmic-facing; sequence MSTANQKPTESVSLNAFKQPK. A helical membrane pass occupies residues 22-44; sequence AFYLIFSIELWERFGYYGLQGIM. Topologically, residues 45–59 are periplasmic; it reads AVYLVKQLGMSEADS. Residues 60 to 80 traverse the membrane as a helical segment; that stretch reads ITLFSSFSALVYGLVAIGGWL. Over 81-89 the chain is Cytoplasmic; the sequence is GDKVLGTKR. A helical membrane pass occupies residues 90–110; it reads VIMLGAIVLAIGYALVAWSGH. Asp-111 is a topological domain (periplasmic). A helical transmembrane segment spans residues 112–132; it reads AGIVYMGMAAIAVGNGLFKAN. Residues 133–153 lie on the Cytoplasmic side of the membrane; that stretch reads PSSLLSTCYEKNDPRLDGAFT. A helical membrane pass occupies residues 154–174; the sequence is MYYMSVNIGSFFSMIATPWLA. At 175-178 the chain is on the periplasmic side; the sequence is AKYG. The helical transmembrane segment at 179–199 threads the bilayer; that stretch reads WSVAFALSVVGLLITIVNFAF. Residues 200 to 219 lie on the Cytoplasmic side of the membrane; it reads CQRWVKQYGSKPDFEPINYR. Residues 220-240 form a helical membrane-spanning segment; that stretch reads NLLLTIIGVVALIAIATWLLH. The Periplasmic portion of the chain corresponds to 241-246; it reads NQEVAR. A helical membrane pass occupies residues 247–267; the sequence is MALGVVAFGIVVIFGKEAFAM. The Cytoplasmic segment spans residues 268–274; sequence KGAARRK. The helical transmembrane segment at 275–295 threads the bilayer; it reads MIVAFILMLEAIIFFVLYSQM. Residues 296–320 are Periplasmic-facing; the sequence is PTSLNFFAIRNVEHSILGLAVEPEQ. Residues 321-341 form a helical membrane-spanning segment; sequence YQALNPFWIIIGSPILAAIYN. The Cytoplasmic segment spans residues 342–352; it reads KMGDTLPMPTK. Residues 353-373 traverse the membrane as a helical segment; the sequence is FAIGMVMCSGAFLILPLGAKF. Residues 374–378 are Periplasmic-facing; it reads ASDAG. The chain crosses the membrane as a helical span at residues 379 to 399; it reads IVSVSWLVASYGLQSIGELMI. Residues 400–414 lie on the Cytoplasmic side of the membrane; that stretch reads SGLGLAMVAQLVPQR. The chain crosses the membrane as a helical span at residues 415–435; the sequence is LMGFIMGSWFLTTAGANLIGG. Topologically, residues 436 to 459 are periplasmic; it reads YVAGMMAVPDNVTDPLMSLEVYGR. Residues 460–480 form a helical membrane-spanning segment; sequence VFLQIGVATAVIAVLMLLTAP. The Cytoplasmic portion of the chain corresponds to 481–500; the sequence is KLHRMTQDDAADKAAKAAVA.

This sequence belongs to the major facilitator superfamily. Proton-dependent oligopeptide transporter (POT/PTR) (TC 2.A.17) family. DtpA subfamily. In terms of assembly, monomer. Has a crown-like structure with a diameter of 8 nm and a central density.

The protein localises to the cell inner membrane. Functionally, proton-dependent permease that transports di- and tripeptides as well as structurally related peptidomimetics such as aminocephalosporins into the cell. Has a clear preference for dipeptides and tripeptides composed of L-amino acids, and discriminates dipeptides on the basis of the position of charges within the substrate. This chain is Dipeptide and tripeptide permease A (dtpA), found in Escherichia coli (strain K12).